We begin with the raw amino-acid sequence, 217 residues long: Large ribosomal subunit protein uL1 (217 aa).

It belongs to the universal ribosomal protein uL1 family. In terms of assembly, part of the 50S ribosomal subunit.

In terms of biological role, binds directly to 23S rRNA. The L1 stalk is quite mobile in the ribosome, and is involved in E site tRNA release. Protein L1 is also a translational repressor protein, it controls the translation of the L11 operon by binding to its mRNA. In Wolbachia pipientis wMel, this protein is Large ribosomal subunit protein uL1.